A 116-amino-acid polypeptide reads, in one-letter code: Ribonuclease P protein component (116 aa).

Belongs to the RnpA family. As to quaternary structure, consists of a catalytic RNA component (M1 or rnpB) and a protein subunit.

It carries out the reaction Endonucleolytic cleavage of RNA, removing 5'-extranucleotides from tRNA precursor.. Its function is as follows. RNaseP catalyzes the removal of the 5'-leader sequence from pre-tRNA to produce the mature 5'-terminus. It can also cleave other RNA substrates such as 4.5S RNA. The protein component plays an auxiliary but essential role in vivo by binding to the 5'-leader sequence and broadening the substrate specificity of the ribozyme. This is Ribonuclease P protein component from Carboxydothermus hydrogenoformans (strain ATCC BAA-161 / DSM 6008 / Z-2901).